Reading from the N-terminus, the 285-residue chain is Ribonuclease H1 (285 aa).

The interval 72–122 (RSSSSPDGSKGQESAHVQKLQVKTSKRPREPLGEEEEPPEPGAKHTRQDTE) is disordered. One can recognise an RNase H type-1 domain in the interval 135–281 (MGESVVVYTD…ADRLAREGAK (147 aa)). 4 residues coordinate Mg(2+): D144, E185, D209, and D273.

The protein belongs to the RNase H family. As to quaternary structure, monomer. It depends on Mg(2+) as a cofactor.

The protein localises to the cytoplasm. It catalyses the reaction Endonucleolytic cleavage to 5'-phosphomonoester.. Its activity is regulated as follows. In the presence of magnesium, manganese is inhibitory. Its function is as follows. Endonuclease that specifically degrades the RNA of RNA-DNA hybrids. Plays a role in RNA polymerase II (RNAp II) transcription termination by degrading R-loop RNA-DNA hybrid formation at G-rich pause sites located downstream of the poly(A) site and behind the elongating RNAp II. This chain is Ribonuclease H1 (Rnaseh1), found in Rattus norvegicus (Rat).